The following is a 632-amino-acid chain: 1-deoxy-D-xylulose-5-phosphate synthase (632 aa).

Thiamine diphosphate-binding positions include His87 and 128 to 130; that span reads GHS. Asp159 contributes to the Mg(2+) binding site. Thiamine diphosphate is bound by residues 160–161, Asn188, Phe295, and Glu377; that span reads GA. Asn188 provides a ligand contact to Mg(2+).

The protein belongs to the transketolase family. DXPS subfamily. In terms of assembly, homodimer. Mg(2+) serves as cofactor. It depends on thiamine diphosphate as a cofactor.

It catalyses the reaction D-glyceraldehyde 3-phosphate + pyruvate + H(+) = 1-deoxy-D-xylulose 5-phosphate + CO2. It participates in metabolic intermediate biosynthesis; 1-deoxy-D-xylulose 5-phosphate biosynthesis; 1-deoxy-D-xylulose 5-phosphate from D-glyceraldehyde 3-phosphate and pyruvate: step 1/1. Its function is as follows. Catalyzes the acyloin condensation reaction between C atoms 2 and 3 of pyruvate and glyceraldehyde 3-phosphate to yield 1-deoxy-D-xylulose-5-phosphate (DXP). This Stutzerimonas stutzeri (strain A1501) (Pseudomonas stutzeri) protein is 1-deoxy-D-xylulose-5-phosphate synthase.